A 520-amino-acid polypeptide reads, in one-letter code: Pentatricopeptide repeat-containing protein At1g28690, mitochondrial (520 aa).

Residues 1 to 19 constitute a mitochondrion transit peptide; sequence MRIFRFTSISPRILPSNHY. PPR repeat units follow at residues 68–98, 99–133, 134–168, 174–208, 209–235, 236–271, 272–306, 307–337, 338–372, 373–403, and 409–439; these read DLNISIKLLILHLKCGCLSYARQVFDELPKP, TLSAYNYMISGYLKHGLVKELLLLVQRMSYSGEKA, DGYTLSMVLKASNSRGSTMILPRSLCRLVHARIIK, DDVLITALVDTYVKSGKLESARTVFETMKDENVVC, CTSMISGYMNQGFVEDAEEIFNTTKVK, DIVVYNAMVEGFSRSGETAKRSVDMYISMQRAGFHP, NISTFASVIGACSVLTSHEVGQQVHAQIMKSGVYT, HIKMGSSLLDMYAKCGGINDARRVFDQMQEK, NVFSWTSMIDGYGKNGNPEEALELFTRMKEFRIEP, NYVTFLGALSACSHSGLVDKGYEIFESMQRD, and KMEHYACIVDLMGRAGDLNKAFEFARAMPER. The segment at 444–520 is type E motif; it reads IWAALLSSCN…TIGRSWTSED (77 aa).

Belongs to the PPR family. PCMP-E subfamily.

Its subcellular location is the mitochondrion. The protein is Pentatricopeptide repeat-containing protein At1g28690, mitochondrial (PCMP-E34) of Arabidopsis thaliana (Mouse-ear cress).